A 165-amino-acid polypeptide reads, in one-letter code: Adenine phosphoribosyltransferase (165 aa).

Belongs to the purine/pyrimidine phosphoribosyltransferase family. Homodimer.

Its subcellular location is the cytoplasm. The enzyme catalyses AMP + diphosphate = 5-phospho-alpha-D-ribose 1-diphosphate + adenine. It participates in purine metabolism; AMP biosynthesis via salvage pathway; AMP from adenine: step 1/1. Its function is as follows. Catalyzes a salvage reaction resulting in the formation of AMP, that is energically less costly than de novo synthesis. The sequence is that of Adenine phosphoribosyltransferase from Bdellovibrio bacteriovorus (strain ATCC 15356 / DSM 50701 / NCIMB 9529 / HD100).